Here is a 367-residue protein sequence, read N- to C-terminus: Protein valois (367 aa).

3 WD repeats span residues Gln-101–Gln-139, Ala-152–Thr-192, and Ser-198–Thr-238. The interval Leu-309–Lys-367 is interaction with csul.

Interacts with csul and tud. As to expression, in oocytes, localizes to pole plasm and nuage (at protein level). Expressed stronger in the germline than in somatic cells. In the germarium it sometimes concentrates in perinuclear aggregates that disappear by stage 2 of oogenesis. At later stages, it is uniformly distributed in the nurse cells and oocyte, as well as in young embryos, with no particular enrichment at the posterior or inside the pole cells (at protein level).

The protein localises to the cytoplasm. Its function is as follows. Involved in specific localization of cytoplasmic proteins during the formation of pole plasm. Required for synthesis and/or stability of oskar protein (osk) and localization of tudor (tud) in both the nuage and posterior pole of the oocyte. Required for normal posterior localization of osk in later stages of oogenesis and for posterior localization of the vasa (vas) protein during the entire process of pole plasm assembly. May act by regulating the complex that contains the arginine N-methyltransferase csul. The sequence is that of Protein valois (vls) from Drosophila melanogaster (Fruit fly).